A 152-amino-acid chain; its full sequence is Deoxyuridine 5'-triphosphate nucleotidohydrolase (152 aa).

Substrate-binding positions include 71–73, Asn-84, and 88–90; these read RSG and LID.

This sequence belongs to the dUTPase family. It depends on Mg(2+) as a cofactor.

The catalysed reaction is dUTP + H2O = dUMP + diphosphate + H(+). It functions in the pathway pyrimidine metabolism; dUMP biosynthesis; dUMP from dCTP (dUTP route): step 2/2. Its function is as follows. This enzyme is involved in nucleotide metabolism: it produces dUMP, the immediate precursor of thymidine nucleotides and it decreases the intracellular concentration of dUTP so that uracil cannot be incorporated into DNA. In Xanthomonas campestris pv. campestris (strain 8004), this protein is Deoxyuridine 5'-triphosphate nucleotidohydrolase.